A 312-amino-acid polypeptide reads, in one-letter code: MKWSEISIHTTHEAVEAISNILHEAGAGGVVIEDPYDLVKDRDDWYGEIVELNPDDYPEEGVVIKAYLPVNSFLGETVEQIKQAINNLWLYDIDLGKNKITLSEVNEEEWATAWKKHYHPVKVSEKFTIVPTWETYEPASNDELIIEMDPGMAFGTGTHPTTVMCLQALEKYVHPGDNVIDVGTGSGILSIAAAMLGAHSVRALDLDPVAIDSARLNVKLNKVQHVVTVAQNNLLDHIDEQADVIVANILAEIILRFTADAYRLLKPGGRFITSGIIQAKKQDVKDGLLAAGFFIEEVNVMEDWVAFVAIKP.

S-adenosyl-L-methionine-binding residues include threonine 162, glycine 183, aspartate 205, and asparagine 248.

Belongs to the methyltransferase superfamily. PrmA family.

The protein resides in the cytoplasm. It catalyses the reaction L-lysyl-[protein] + 3 S-adenosyl-L-methionine = N(6),N(6),N(6)-trimethyl-L-lysyl-[protein] + 3 S-adenosyl-L-homocysteine + 3 H(+). Methylates ribosomal protein L11. The polypeptide is Ribosomal protein L11 methyltransferase (Geobacillus thermodenitrificans (strain NG80-2)).